The primary structure comprises 556 residues: Peptide chain release factor 3 (556 aa).

The tr-type G domain maps to 28–297 (QQRRNFAIIS…AFLDYALKPG (270 aa)). Residues 37-44 (SHPDAGKT), 105-109 (DTPGH), and 159-162 (NKMD) contribute to the GTP site.

The protein belongs to the TRAFAC class translation factor GTPase superfamily. Classic translation factor GTPase family. PrfC subfamily.

Its subcellular location is the cytoplasm. Its function is as follows. Increases the formation of ribosomal termination complexes and stimulates activities of RF-1 and RF-2. It binds guanine nucleotides and has strong preference for UGA stop codons. It may interact directly with the ribosome. The stimulation of RF-1 and RF-2 is significantly reduced by GTP and GDP, but not by GMP. The sequence is that of Peptide chain release factor 3 from Synechococcus elongatus (strain ATCC 33912 / PCC 7942 / FACHB-805) (Anacystis nidulans R2).